The primary structure comprises 206 residues: Putative 3-methyladenine DNA glycosylase (206 aa).

The protein belongs to the DNA glycosylase MPG family.

In Salinibacter ruber (strain DSM 13855 / M31), this protein is Putative 3-methyladenine DNA glycosylase.